Reading from the N-terminus, the 210-residue chain is Ribonuclease HII (210 aa).

The RNase H type-2 domain occupies 16–207 (AIVVGVDEVG…VKKCIISTKN (192 aa)). Positions 22, 23, and 116 each coordinate a divalent metal cation.

Belongs to the RNase HII family. It depends on Mn(2+) as a cofactor. The cofactor is Mg(2+).

The protein resides in the cytoplasm. It carries out the reaction Endonucleolytic cleavage to 5'-phosphomonoester.. Functionally, endonuclease that specifically degrades the RNA of RNA-DNA hybrids. The sequence is that of Ribonuclease HII from Anaplasma phagocytophilum (strain HZ).